An 837-amino-acid polypeptide reads, in one-letter code: Ribosome biogenesis ATPase RIX7 (837 aa).

Disordered regions lie at residues 36 to 56 (RSLR…EEDE) and 149 to 207 (ITST…LKSL). S42 carries the phosphoserine modification. Acidic residues predominate over residues 43–56 (QGEEGENNEGEEDE). Positions 149–163 (ITSTWSKSGSVSESI) are enriched in polar residues. Basic residues predominate over residues 176–192 (KSKKRSKEGTCKVKRQK). 246-253 (GPPGCGKT) lines the ATP pocket. Residues 443–468 (PTTATDSSEDNMEIDETANGDESSLK) form a disordered region. Over residues 449 to 461 (SSEDNMEIDETAN) the composition is skewed to acidic residues. An ATP-binding site is contributed by 574 to 581 (GPPGCGKT).

This sequence belongs to the AAA ATPase family.

It localises to the nucleus. Its subcellular location is the nucleolus. Functionally, involved in ribosome biogenesis. Seems to be required for restructuring nucleoplasmic 60S pre-ribosomal particles to make them competent for nuclear export. This Saccharomyces cerevisiae (strain ATCC 204508 / S288c) (Baker's yeast) protein is Ribosome biogenesis ATPase RIX7 (RIX7).